The sequence spans 426 residues: Histidine--tRNA ligase (426 aa).

The protein belongs to the class-II aminoacyl-tRNA synthetase family. In terms of assembly, homodimer.

It localises to the cytoplasm. It carries out the reaction tRNA(His) + L-histidine + ATP = L-histidyl-tRNA(His) + AMP + diphosphate + H(+). This chain is Histidine--tRNA ligase, found in Streptococcus pyogenes serotype M18 (strain MGAS8232).